An 891-amino-acid polypeptide reads, in one-letter code: Alanine--tRNA ligase (891 aa).

Residues H569, H573, C671, and H675 each coordinate Zn(2+).

It belongs to the class-II aminoacyl-tRNA synthetase family. As to quaternary structure, homotetramer. It depends on Zn(2+) as a cofactor.

Its subcellular location is the cytoplasm. It catalyses the reaction tRNA(Ala) + L-alanine + ATP = L-alanyl-tRNA(Ala) + AMP + diphosphate. Functionally, catalyzes the attachment of alanine to tRNA(Ala) in a two-step reaction: alanine is first activated by ATP to form Ala-AMP and then transferred to the acceptor end of tRNA(Ala). Also edits incorrectly charged Ser-tRNA(Ala) and Gly-tRNA(Ala) via its editing domain. The polypeptide is Alanine--tRNA ligase (Blochmanniella floridana).